The sequence spans 200 residues: dITP/XTP pyrophosphatase (200 aa).

A substrate-binding site is contributed by 8 to 13 (TGNQGK). Asp69 acts as the Proton acceptor in catalysis. Asp69 lines the Mg(2+) pocket. Substrate contacts are provided by residues Ser70, 154-157 (FGYD), Lys177, and 182-183 (HR).

It belongs to the HAM1 NTPase family. As to quaternary structure, homodimer. Mg(2+) serves as cofactor.

It carries out the reaction XTP + H2O = XMP + diphosphate + H(+). It catalyses the reaction dITP + H2O = dIMP + diphosphate + H(+). The catalysed reaction is ITP + H2O = IMP + diphosphate + H(+). Pyrophosphatase that catalyzes the hydrolysis of nucleoside triphosphates to their monophosphate derivatives, with a high preference for the non-canonical purine nucleotides XTP (xanthosine triphosphate), dITP (deoxyinosine triphosphate) and ITP. Seems to function as a house-cleaning enzyme that removes non-canonical purine nucleotides from the nucleotide pool, thus preventing their incorporation into DNA/RNA and avoiding chromosomal lesions. The protein is dITP/XTP pyrophosphatase of Vibrio parahaemolyticus serotype O3:K6 (strain RIMD 2210633).